The following is a 118-amino-acid chain: NADH-quinone oxidoreductase subunit A 1 (118 aa).

3 consecutive transmembrane segments (helical) span residues 1 to 21, 60 to 80, and 87 to 107; these read MLGV…FGLA, FYII…MYPW, and LGIF…VGYI.

The protein belongs to the complex I subunit 3 family. NDH-1 is composed of 14 different subunits. Subunits NuoA, H, J, K, L, M, N constitute the membrane sector of the complex.

The protein localises to the cell inner membrane. The catalysed reaction is a quinone + NADH + 5 H(+)(in) = a quinol + NAD(+) + 4 H(+)(out). Its function is as follows. NDH-1 shuttles electrons from NADH, via FMN and iron-sulfur (Fe-S) centers, to quinones in the respiratory chain. The immediate electron acceptor for the enzyme in this species is believed to be ubiquinone. Couples the redox reaction to proton translocation (for every two electrons transferred, four hydrogen ions are translocated across the cytoplasmic membrane), and thus conserves the redox energy in a proton gradient. The chain is NADH-quinone oxidoreductase subunit A 1 from Geobacter sulfurreducens (strain ATCC 51573 / DSM 12127 / PCA).